The chain runs to 637 residues: Clathrin coat assembly protein AP180A (637 aa).

The region spanning 1–126 (MTTYFKLVKG…REFGKIKKDY (126 aa)) is the ENTH domain. The tract at residues 555-637 (TQNHLQQQQQ…YANNLNLIDM (83 aa)) is disordered. 2 stretches are compositionally biased toward low complexity: residues 560-579 (QQQQ…QPQQ) and 600-622 (QPQN…TQQP). Residues 587–637 (AGANPVTNITGTVQPQNFPFYPQQQPQPEQSQTQQPVLGNQYANNLNLIDM) are clathrin-binding. Positions 623–637 (VLGNQYANNLNLIDM) are enriched in polar residues.

This sequence belongs to the AP180 family. As to quaternary structure, interacts with PAN1 and the clathrin heavy and light chains CHC1 and CLC1.

The protein localises to the bud. It is found in the bud neck. Its subcellular location is the cell membrane. The protein resides in the cytoplasm. Its function is as follows. Involved in endocytosis and clathrin cage assembly. The protein is Clathrin coat assembly protein AP180A (YAP1801) of Saccharomyces cerevisiae (strain ATCC 204508 / S288c) (Baker's yeast).